The chain runs to 177 residues: Secretion monitor (177 aa).

The signal sequence occupies residues 1-37 (MIGILNRWRQFGRRYFWPHLLLGMVAASLGVPSNLSG).

It belongs to the SecM family.

The protein resides in the cytoplasm. Its subcellular location is the cytosol. It is found in the periplasm. Functionally, regulates secA expression by translational coupling of the secM secA operon. Translational pausing at a specific Pro residue 5 residues before the end of the protein may allow disruption of a mRNA repressor helix that normally suppresses secA translation initiation. In Yersinia pseudotuberculosis serotype O:1b (strain IP 31758), this protein is Secretion monitor.